A 74-amino-acid chain; its full sequence is Serine protease inhibitor Kazal-type 7 (74 aa).

The signal sequence occupies residues 1 to 17 (MKLLGGLLLLFTATCLC). The Kazal-like domain maps to 18–74 (NVDCDIYKKYPVVAIPCPIENIPVCGSDYITYGNKCKLCTEILRSNGKIQFLHEGHC). 3 cysteine pairs are disulfide-bonded: Cys21/Cys56, Cys34/Cys53, and Cys42/Cys74.

It is found in the secreted. Its function is as follows. Probable serine protease inhibitor. This is Serine protease inhibitor Kazal-type 7 (Spink7) from Rattus norvegicus (Rat).